Here is a 175-residue protein sequence, read N- to C-terminus: Alpha-crystallin B chain (175 aa).

An N-acetylmethionine modification is found at Met1. Ser19, Ser45, and Ser59 each carry phosphoserine. A sHSP domain is found at 56-164; that stretch reads RAPSWIDTGL…PERTIPITRE (109 aa). His83 contributes to the Zn(2+) binding site. An N6-acetyllysine modification is found at Lys92. Positions 104, 106, 111, and 119 each coordinate Zn(2+). Positions 145–175 are disordered; the sequence is VNGPRKQVSGPERTIPITREEKPAVAAAPKK. N6-acetyllysine is present on Lys166.

Belongs to the small heat shock protein (HSP20) family. In terms of assembly, heteromer composed of three CRYAA and one CRYAB subunits. Aggregates with homologous proteins, including the small heat shock protein HSPB1, to form large heteromeric complexes. Inter-subunit bridging via zinc ions enhances stability, which is crucial as there is no protein turn over in the lens. Interacts with HSPBAP1. Interacts with TTN/titin. Interacts with TMEM109; in the cellular response to DNA damage. Interacts with DES; binds rapidly during early stages of DES filament assembly and a reduced binding seen in the later stages. Interacts with TMED10; the interaction mediates the translocation from the cytoplasm into the ERGIC (endoplasmic reticulum-Golgi intermediate compartment) and thereby secretion. Interacts with ATP6V1A and with MTOR, forming a ternary complex. As to expression, abundantly expressed in the lens of the eye. Expressed in ventricular cardiomyocytes of the heart. Also expressed in skeletal muscle and the kidney.

Its subcellular location is the cytoplasm. The protein resides in the cytosol. It is found in the nucleus. The protein localises to the secreted. It localises to the lysosome. Functionally, may contribute to the transparency and refractive index of the lens. Has chaperone-like activity, preventing aggregation of various proteins under a wide range of stress conditions. In lens epithelial cells, stabilizes the ATP6V1A protein, preventing its degradation by the proteasome. The protein is Alpha-crystallin B chain of Mus musculus (Mouse).